The following is a 66-amino-acid chain: Large ribosomal subunit protein bL33 (66 aa).

It belongs to the bacterial ribosomal protein bL33 family.

This chain is Large ribosomal subunit protein bL33, found in Prochlorococcus marinus (strain MIT 9303).